We begin with the raw amino-acid sequence, 359 residues long: Medium-wave-sensitive opsin 1 (359 aa).

At 1 to 47 (MAQQLTGEQTLDHYEDSTQASIFTYTNSNSTRGPFEGPNYHIAPRWV) the chain is on the extracellular side. The interval 12 to 38 (DHYEDSTQASIFTYTNSNSTRGPFEGP) is required for 11-cis-retinal regeneration. N29 is a glycosylation site (N-linked (GlcNAc...) asparagine). Residues 48–72 (YHLTSTWMILVVIASVFTNGLVLAA) traverse the membrane as a helical segment. Over 73 to 84 (TMRFKKLRHPLN) the chain is Cytoplasmic. A helical membrane pass occupies residues 85 to 110 (WILVNLAVADLAETIIASTISVVNQI). Residues 111–124 (YGYFVLGHPLCVIE) lie on the Extracellular side of the membrane. C121 and C198 are disulfide-bonded. Residues 125-144 (GYIVSLCGITGLWSLAIISW) traverse the membrane as a helical segment. Over 145 to 163 (ERWLVVCKPFGNVRFDAKL) the chain is Cytoplasmic. The helical transmembrane segment at 164 to 187 (ATVGIVFSWVWAAVWTAPPIFGWS) threads the bilayer. Topologically, residues 188–213 (RYWPYGLKTSCGPDVFSGTSYPGVQS) are extracellular. Residues 214–241 (YMMVLMVTCCIFPLSIIVLCYLQVWLAI) form a helical membrane-spanning segment. Topologically, residues 242–263 (RAVAKQQKESESTQKAEKEVTR) are cytoplasmic. A helical transmembrane segment spans residues 264–287 (MVVVMVFAYCLCWGPYTFFACFAT). Residues 288–295 (AHPGYAFH) lie on the Extracellular side of the membrane. The helical transmembrane segment at 296-320 (PLVASLPSYFAKSATIYNPIIYVFM) threads the bilayer. N6-(retinylidene)lysine is present on K307. Residues 321-359 (NRQFRNCILQLFGKKVDDSSELSSTSKTEVSSVSSVSPA) lie on the Cytoplasmic side of the membrane.

Belongs to the G-protein coupled receptor 1 family. Opsin subfamily. In terms of assembly, monomer. Homodimer. Homotetramer. Post-translationally, O-glycosylated. Phosphorylated on some or all of the serine and threonine residues present in the C-terminal region. Expressed in cone photoreceptor cells.

It localises to the membrane. In terms of biological role, visual pigments are the light-absorbing molecules that mediate vision. They consist of an apoprotein, opsin, covalently linked to cis-retinal. May increase spectral sensitivity in dim light. This is Medium-wave-sensitive opsin 1 (Opn1mw) from Rattus norvegicus (Rat).